The following is a 132-amino-acid chain: uncharacterized protein (132 aa).

The next 4 helical transmembrane spans lie at 15–37, 49–71, 81–103, and 110–129; these read FPEY…LLLY, AFIP…LRLF, VILT…LALV, and LAAT…MAFV.

The protein resides in the cell membrane. This is an uncharacterized protein from Archaeoglobus fulgidus (strain ATCC 49558 / DSM 4304 / JCM 9628 / NBRC 100126 / VC-16).